Consider the following 331-residue polypeptide: UPF0194 membrane protein YbhG (331 aa).

The N-terminal stretch at 1 to 15 (MKKPVVIGLAVVVLA) is a signal peptide. Residues 107-208 (EEIAQAAAAV…LNLQDSTLIA (102 aa)) adopt a coiled-coil conformation.

This sequence belongs to the UPF0194 family.

Its subcellular location is the periplasm. The protein is UPF0194 membrane protein YbhG of Escherichia coli O157:H7 (strain EC4115 / EHEC).